Here is a 284-residue protein sequence, read N- to C-terminus: NAD kinase (284 aa).

The active-site Proton acceptor is the Asp-70. Residues 70–71 (DG), 139–140 (NE), Lys-167, Asp-169, Leu-177, 180–185 (TAYNLS), and Gln-236 each bind NAD(+).

Belongs to the NAD kinase family. The cofactor is a divalent metal cation.

The protein localises to the cytoplasm. It carries out the reaction NAD(+) + ATP = ADP + NADP(+) + H(+). Involved in the regulation of the intracellular balance of NAD and NADP, and is a key enzyme in the biosynthesis of NADP. Catalyzes specifically the phosphorylation on 2'-hydroxyl of the adenosine moiety of NAD to yield NADP. This is NAD kinase from Helicobacter pylori (strain HPAG1).